Reading from the N-terminus, the 230-residue chain is Urease accessory protein UreF (230 aa).

This sequence belongs to the UreF family. UreD, UreF and UreG form a complex that acts as a GTP-hydrolysis-dependent molecular chaperone, activating the urease apoprotein by helping to assemble the nickel containing metallocenter of UreC. The UreE protein probably delivers the nickel.

It is found in the cytoplasm. Required for maturation of urease via the functional incorporation of the urease nickel metallocenter. The polypeptide is Urease accessory protein UreF (Marinomonas sp. (strain MWYL1)).